A 636-amino-acid polypeptide reads, in one-letter code: Tumor protein p73 (636 aa).

The interval 1-46 (MAQSTATSPDGGTTFEHLWSSLEPDSTYFDLPQSSRGNNEVVGGTD) is transactivation. T27 is modified (phosphothreonine; by PLK1). Y28 carries the post-translational modification Phosphotyrosine; by SRC and HCK. A disordered region spans residues 78 to 104 (RAASASPYTPEHAASVPTHSPYAQPSS). Residues 94 to 104 (PTHSPYAQPSS) show a composition bias toward polar residues. Y99 carries the post-translational modification Phosphotyrosine; by ABL1. Residues 131–310 (FQQSSTAKSA…DRKADEDHYR (180 aa)) form a DNA-binding region. Zn(2+) is bound by residues C194, H197, C258, and C262. Residues 314–345 (ALNESSAKNGAASKRAFKQSPPAVPALGAGVK) are disordered. Residues 345–380 (KKRRHGDEDTYYLQVRGRENFEILMKLKESLELMEL) form an interaction with HIPK2 region. The interval 345–386 (KKRRHGDEDTYYLQVRGRENFEILMKLKESLELMELVPQPLV) is oligomerization. The PPxY motif signature appears at 483 to 487 (PPPPY). In terms of domain architecture, SAM spans 485–551 (PPYHADPSLV…WRGLQDLKQG (67 aa)). K627 is covalently cross-linked (Glycyl lysine isopeptide (Lys-Gly) (interchain with G-Cter in SUMO); in isoform Alpha). K627 is covalently cross-linked (Glycyl lysine isopeptide (Lys-Gly) (interchain with G-Cter in SUMO2)).

Belongs to the p53 family. As to quaternary structure, found in a complex with p53/TP53 and CABLES1. The C-terminal oligomerization domain binds to the ABL1 tyrosine kinase SH3 domain. Interacts with HECW2. Isoform Beta interacts homotypically and with p53/TP53, whereas isoform Alpha does not. Isoform Gamma interacts homotypically and with all p73 isoforms. Isoform Delta interacts with isoform Gamma, isoform Alpha, and homotypically. Isoforms Alpha and Beta interact with HIPK2. Isoform Alpha interacts with RANBP9. Isoform Beta interacts with WWOX. Interacts (via SAM domain) with FBXO45 (via B30.2/SPRY domain). Interacts with YAP1 (phosphorylated form). Interacts with HCK (via SH3 domain); this inhibits TP73 activity and degradation. Interacts (via SAM domain) with NQO1; this interaction is NADH-dependent, stabilizes TP73 in response to oxidative stress and protects it from ubiquitin-independent degradation by the 20S proteasome. (Microbial infection) Interacts with Epstein-Barr virus protein EBNA6; this interaction inhibits TP73-mediated apoptotic pathway. Zn(2+) is required as a cofactor. Post-translationally, isoform alpha (but not isoform beta) is sumoylated on Lys-627, which potentiates proteasomal degradation but does not affect transcriptional activity. Phosphorylation by PLK1 and PLK3 inhibits the transcription regulator activity and pro-apoptotic function. In terms of processing, higher levels of phosphorylation seen in the brain from patients with Huntington disease. Polyubiquitinated by RCHY1/PIRH2; leading to its degradation by the proteasome. Expressed in striatal neurons of patients with Huntington disease (at protein level). Brain, kidney, placenta, colon, heart, liver, spleen, skeletal muscle, prostate, thymus and pancreas. Highly expressed in fetal tissue. Expressed in the respiratory epithelium.

Its subcellular location is the nucleus. The protein localises to the cytoplasm. Functionally, participates in the apoptotic response to DNA damage. Isoforms containing the transactivation domain are pro-apoptotic, isoforms lacking the domain are anti-apoptotic and block the function of p53 and transactivating p73 isoforms. May be a tumor suppressor protein. Is an activator of FOXJ1 expression. It is an essential factor for the positive regulation of lung ciliated cell differentiation. The sequence is that of Tumor protein p73 (TP73) from Homo sapiens (Human).